The chain runs to 627 residues: Zinc finger protein 256 (627 aa).

Residues 14–96 (VTFEDVAVYF…QKTNPCEICG (83 aa)) form the KRAB domain. A disordered region spans residues 55 to 76 (GSGAGDEEAPYQQSTSPQRVSQ). The segment covering 65-75 (YQQSTSPQRVS) has biased composition (polar residues). C2H2-type zinc fingers lie at residues 90-112 (NPCE…QGTH), 239-261 (YMCS…LRVH), 267-289 (YTCG…RRIH), 295-317 (HQCD…QRVH), 323-345 (YKCS…QRIH), 351-373 (YECS…QRVH), 379-401 (YMCS…RRLH), 407-429 (YECS…QRVH), 435-457 (HECH…ERVH), 463-485 (YECS…WKVH), 491-513 (YECG…QRVH), 519-541 (YECN…RRSH), 547-569 (YECS…RRVH), 575-597 (YECS…QRIH), and 603-625 (YECS…QNVH).

It belongs to the krueppel C2H2-type zinc-finger protein family. In terms of assembly, interacts with TRIM28.

The protein localises to the nucleus. Transcriptional repressor that plays a role in cell proliferation. Requires TRIM28 for its activity. This chain is Zinc finger protein 256 (ZNF256), found in Homo sapiens (Human).